A 208-amino-acid polypeptide reads, in one-letter code: Large ribosomal subunit protein uL4 (208 aa).

A disordered region spans residues 50 to 83 (VKTRAEVSGGGRKPWKQKGTGRARQGSIRAPQWK).

It belongs to the universal ribosomal protein uL4 family. As to quaternary structure, part of the 50S ribosomal subunit.

In terms of biological role, one of the primary rRNA binding proteins, this protein initially binds near the 5'-end of the 23S rRNA. It is important during the early stages of 50S assembly. It makes multiple contacts with different domains of the 23S rRNA in the assembled 50S subunit and ribosome. Forms part of the polypeptide exit tunnel. The polypeptide is Large ribosomal subunit protein uL4 (Mycoplasma mycoides subsp. mycoides SC (strain CCUG 32753 / NCTC 10114 / PG1)).